A 223-amino-acid polypeptide reads, in one-letter code: Ribonuclease 3 (223 aa).

The RNase III domain maps to 1-131; it reads MDGVDELLLR…LIGAVMVDQG (131 aa). E44 serves as a coordination point for Mg(2+). D48 is an active-site residue. Residues D117 and E120 each contribute to the Mg(2+) site. Residue E120 is part of the active site. The DRBM domain occupies 157–220; sequence DPKTKLQKLT…AMSALASLEN (64 aa).

The protein belongs to the ribonuclease III family. As to quaternary structure, homodimer. Mg(2+) is required as a cofactor.

It localises to the cytoplasm. The enzyme catalyses Endonucleolytic cleavage to 5'-phosphomonoester.. In terms of biological role, digests double-stranded RNA. Involved in the processing of primary rRNA transcript to yield the immediate precursors to the large and small rRNAs (23S and 16S). Processes some mRNAs, and tRNAs when they are encoded in the rRNA operon. Processes pre-crRNA and tracrRNA of type II CRISPR loci if present in the organism. The chain is Ribonuclease 3 from Tropheryma whipplei (strain Twist) (Whipple's bacillus).